A 238-amino-acid chain; its full sequence is MSEDLAKQLASYKAQLQQVEAALSGNGENEDLLKLKKDLQEVIELTKDLLSTQPSETLASSDSFASTQPTHSWKVGDKCMAVWSEDGQCYEAEIEEIDEENGTAAITFAGYGNAEVTPLLNLKPVEEGRKAKEDSGNKPMSKKEMIAQQREYKKKKALKKAQRIKELEQEREDQKVKWQQFNNRAYSKNKKGQVKRSIFASPESVTGKVGVGTCGIADKPMTQYQDTSKYNVRHLMPQ.

The region spanning 72 to 132 (SWKVGDKCMA…KPVEEGRKAK (61 aa)) is the Tudor domain. The Nuclear localization signal signature appears at 142–160 (KKEMIAQQREYKKKKALKK). A Phosphoserine modification is found at Ser201. Lys219 is modified (N6-acetyllysine).

The protein belongs to the SMN family. Associates with spliceosomes. Associates with U4/U5/U6 tri-snRNP and with U2 snRNP. Interacts (via Tudor domain) with SNRPD3 (via C-terminus); the interaction is direct. Detected at intermediate levels in skeletal muscle, and at low levels in heart and pancreas.

It localises to the nucleus speckle. The protein localises to the nucleus. Its subcellular location is the cajal body. In terms of biological role, involved in spliceosome assembly. This Homo sapiens (Human) protein is Survival of motor neuron-related-splicing factor 30 (SMNDC1).